The following is a 469-amino-acid chain: 3-isopropylmalate dehydratase large subunit (469 aa).

Positions 347, 408, and 411 each coordinate [4Fe-4S] cluster.

Belongs to the aconitase/IPM isomerase family. LeuC type 1 subfamily. In terms of assembly, heterodimer of LeuC and LeuD. Requires [4Fe-4S] cluster as cofactor.

The enzyme catalyses (2R,3S)-3-isopropylmalate = (2S)-2-isopropylmalate. It participates in amino-acid biosynthesis; L-leucine biosynthesis; L-leucine from 3-methyl-2-oxobutanoate: step 2/4. Functionally, catalyzes the isomerization between 2-isopropylmalate and 3-isopropylmalate, via the formation of 2-isopropylmaleate. This Haemophilus influenzae (strain PittEE) protein is 3-isopropylmalate dehydratase large subunit.